The sequence spans 247 residues: PF03932 family protein CutC (247 aa).

It belongs to the CutC family.

It localises to the cytoplasm. This chain is PF03932 family protein CutC, found in Vibrio campbellii (strain ATCC BAA-1116).